The primary structure comprises 351 residues: S-adenosylmethionine:tRNA ribosyltransferase-isomerase (351 aa).

The protein belongs to the QueA family. In terms of assembly, monomer.

The protein resides in the cytoplasm. It catalyses the reaction 7-aminomethyl-7-carbaguanosine(34) in tRNA + S-adenosyl-L-methionine = epoxyqueuosine(34) in tRNA + adenine + L-methionine + 2 H(+). It participates in tRNA modification; tRNA-queuosine biosynthesis. Transfers and isomerizes the ribose moiety from AdoMet to the 7-aminomethyl group of 7-deazaguanine (preQ1-tRNA) to give epoxyqueuosine (oQ-tRNA). In Photobacterium profundum (strain SS9), this protein is S-adenosylmethionine:tRNA ribosyltransferase-isomerase.